We begin with the raw amino-acid sequence, 422 residues long: Serine protease inhibitor A3A (422 aa).

The signal sequence occupies residues 1-17 (MAFIAALGLLMVGICPA). N-linked (GlcNAc...) asparagine glycans are attached at residues Asn-218, Asn-230, and Asn-271. Residues 369–394 (HTEADVITIARYNFQSAKIKAKIVKV) form an RCL region.

Belongs to the serpin family.

It localises to the secreted. This Mus musculus (Mouse) protein is Serine protease inhibitor A3A (Serpina3a).